Reading from the N-terminus, the 200-residue chain is Small ribosomal subunit protein uS4 (200 aa).

The disordered stretch occupies residues 22-43 (TGKELERRPYAPGQHGPTQRKK). The S4 RNA-binding domain occupies 92–170 (QRLDNIVYRL…VPEYVTFDAE (79 aa)).

Belongs to the universal ribosomal protein uS4 family. Part of the 30S ribosomal subunit. Contacts protein S5. The interaction surface between S4 and S5 is involved in control of translational fidelity.

Its function is as follows. One of the primary rRNA binding proteins, it binds directly to 16S rRNA where it nucleates assembly of the body of the 30S subunit. Functionally, with S5 and S12 plays an important role in translational accuracy. The polypeptide is Small ribosomal subunit protein uS4 (Listeria monocytogenes serotype 4b (strain F2365)).